The sequence spans 144 residues: Large ribosomal subunit protein uL13 (144 aa).

The protein belongs to the universal ribosomal protein uL13 family. In terms of assembly, part of the 50S ribosomal subunit.

Functionally, this protein is one of the early assembly proteins of the 50S ribosomal subunit, although it is not seen to bind rRNA by itself. It is important during the early stages of 50S assembly. The protein is Large ribosomal subunit protein uL13 of Mycoplasmopsis pulmonis (strain UAB CTIP) (Mycoplasma pulmonis).